Reading from the N-terminus, the 301-residue chain is Ribosomal protein L11 methyltransferase (301 aa).

Thr-130, Gly-151, Asp-172, and Asn-239 together coordinate S-adenosyl-L-methionine.

Belongs to the methyltransferase superfamily. PrmA family.

It is found in the cytoplasm. The catalysed reaction is L-lysyl-[protein] + 3 S-adenosyl-L-methionine = N(6),N(6),N(6)-trimethyl-L-lysyl-[protein] + 3 S-adenosyl-L-homocysteine + 3 H(+). Methylates ribosomal protein L11. The protein is Ribosomal protein L11 methyltransferase of Campylobacter hominis (strain ATCC BAA-381 / DSM 21671 / CCUG 45161 / LMG 19568 / NCTC 13146 / CH001A).